Reading from the N-terminus, the 692-residue chain is Elongation factor G (692 aa).

A tr-type G domain is found at 8 to 282 (ENTRNIGIMA…AVIDYLPSPL (275 aa)). GTP is bound by residues 17 to 24 (AHIDAGKT), 81 to 85 (DTPGH), and 135 to 138 (NKMD).

The protein belongs to the TRAFAC class translation factor GTPase superfamily. Classic translation factor GTPase family. EF-G/EF-2 subfamily.

It localises to the cytoplasm. Catalyzes the GTP-dependent ribosomal translocation step during translation elongation. During this step, the ribosome changes from the pre-translocational (PRE) to the post-translocational (POST) state as the newly formed A-site-bound peptidyl-tRNA and P-site-bound deacylated tRNA move to the P and E sites, respectively. Catalyzes the coordinated movement of the two tRNA molecules, the mRNA and conformational changes in the ribosome. The polypeptide is Elongation factor G (Bacillus cereus (strain ZK / E33L)).